Reading from the N-terminus, the 338-residue chain is MNTEASQDQTVPETTGVRLRQAREALGLTQQMVAERLCLKVSTIRDIEEDKAQANLASTFHRGYIRSYAKLVHLPEDELLPMLAKQAPIRAAKVAPMQSFSLGKKHKKRDGWLMSFTWLIVLVVLGLTGAWWWQNHQAQQAEIVTMADQSSAQLSQNGGQSVPLSDDNSDPANPVDTQAPVANSQPSTPTENGTVPATSSAAPADTANNGVNTTAPQGTTSAESAVVSPSQAPLPSVSTAQPPLPTADAGVTGTASSADSLVMNFTADCWLQVVDASGKTLFSGIQKGGATLNLSGKAPYKLTIGAPGALTITYQGNPVDLSKFIKANRVARLTVGVE.

Residues 1-111 (MNTEASQDQT…LGKKHKKRDG (111 aa)) lie on the Cytoplasmic side of the membrane. The 61-residue stretch at 19-79 (LRQAREALGL…KLVHLPEDEL (61 aa)) folds into the HTH cro/C1-type domain. Residues 30 to 49 (QQMVAERLCLKVSTIRDIEE) constitute a DNA-binding region (H-T-H motif). A helical; Signal-anchor for type II membrane protein transmembrane segment spans residues 112–132 (WLMSFTWLIVLVVLGLTGAWW). Over 133–338 (WQNHQAQQAE…RVARLTVGVE (206 aa)) the chain is Periplasmic. 2 stretches are compositionally biased toward polar residues: residues 151–163 (SAQLSQNGGQSVP) and 180–195 (PVANSQPSTPTENGTV). The interval 151 to 253 (SAQLSQNGGQ…LPTADAGVTG (103 aa)) is disordered. The segment covering 196–209 (PATSSAAPADTANN) has biased composition (low complexity). Over residues 210 to 241 (GVNTTAPQGTTSAESAVVSPSQAPLPSVSTAQ) the composition is skewed to polar residues.

The protein belongs to the RodZ family.

Its subcellular location is the cell inner membrane. Cytoskeletal protein that is involved in cell-shape control through regulation of the length of the long axis. The polypeptide is Cytoskeleton protein RodZ (Yersinia enterocolitica serotype O:8 / biotype 1B (strain NCTC 13174 / 8081)).